Consider the following 494-residue polypeptide: UPF0371 protein M28_Spy1076 (494 aa).

Belongs to the UPF0371 family.

The chain is UPF0371 protein M28_Spy1076 from Streptococcus pyogenes serotype M28 (strain MGAS6180).